The chain runs to 265 residues: Proline-rich protein 23B (265 aa).

Low complexity predominate over residues 1–18; that stretch reads MVSRPRSPSAFPAPWWGQ. 2 disordered regions span residues 1 to 49 and 226 to 265; these read MVSR…EDPA and PSSPLQPLPPSPCVGSPGPHARSPLPERPPCKARRRLFQA. Residues 226–237 are compositionally biased toward pro residues; sequence PSSPLQPLPPSP. The span at 256–265 shows a compositional bias: basic residues; the sequence is CKARRRLFQA.

This sequence belongs to the PRR23 family.

The protein is Proline-rich protein 23B (PRR23B) of Homo sapiens (Human).